The chain runs to 268 residues: DNA ligase (268 aa).

The active-site N6-AMP-lysine intermediate is Lys41. Positions 111, 181, and 187 each coordinate ATP.

The protein belongs to the ATP-dependent DNA ligase family. Requires a divalent metal cation as cofactor.

The enzyme catalyses ATP + (deoxyribonucleotide)n-3'-hydroxyl + 5'-phospho-(deoxyribonucleotide)m = (deoxyribonucleotide)n+m + AMP + diphosphate.. Catalyzes efficient strand joining on a single nicked DNA. This is DNA ligase (ligA) from Haemophilus influenzae (strain ATCC 51907 / DSM 11121 / KW20 / Rd).